Here is a 312-residue protein sequence, read N- to C-terminus: MAAQKINEGLEHLAKAEKYLKTGFLKWKPDYDSAASEYGKAAVAFKNAKQFEQAKDACLKEAVAHENNRALFHAAKAYEQAGMMLKEMQKLPEAVQLIEKASMMYLENGTPDTAAMALERAGKLIENVDPEKAVQLYQQTANVFENEERLRQAVELLGKASRLLVRGRRFDEAAISIQKEKNIYKEIENYPTCYKKTIAQVLVHLHRNDYVAAERCVRESYSIPGFNGSEDCAALEQLLEGYDQQDQDQVAEVCNSPLFKYMDNDYAKLGLSLVVPGGGVKKKAAAPPQAKPEGTAAPAAEEEEDEYAGGLC.

Residues 281–312 (KKKAAAPPQAKPEGTAAPAAEEEEDEYAGGLC) are disordered. Residues 285-299 (AAPPQAKPEGTAAPA) are compositionally biased toward low complexity. The span at 300-312 (AEEEEDEYAGGLC) shows a compositional bias: acidic residues.

This sequence belongs to the SNAP family. In terms of assembly, interacts with RAB11FIP5. Interacts with VTI1A.

The protein localises to the membrane. Its subcellular location is the golgi apparatus. Required for vesicular transport between the endoplasmic reticulum and the Golgi apparatus. The polypeptide is Gamma-soluble NSF attachment protein (Bos taurus (Bovine)).